Here is a 325-residue protein sequence, read N- to C-terminus: Metacaspase-9 (325 aa).

Active-site residues include H95 and C147. Position 147 is an S-nitrosocysteine (C147). The N-linked (GlcNAc...) asparagine glycan is linked to N177.

It belongs to the peptidase C14B family. The two subunits are derived from the precursor sequence by an autocatalytic mechanism. Post-translationally, S-nitrosylation at Cys-147 suppresses both autoprocessing and proteolytic activity of the full-length protein, but does not affect the activity of the mature processed form. In terms of tissue distribution, expressed in root tips, cauline leaves, flowers and siliques.

Its subcellular location is the secreted. It is found in the extracellular space. The protein resides in the apoplast. Inhibited by serpin ZX and nitric oxide through cysteine nitrosylation. In terms of biological role, cysteine protease that cleaves specifically after arginine or lysine residues. Does not cleave caspase-specific substrates. Required for proteolytic processing of GRI. This Arabidopsis thaliana (Mouse-ear cress) protein is Metacaspase-9 (AMC9).